We begin with the raw amino-acid sequence, 483 residues long: Keratin, type II cytoskeletal 7 (483 aa).

Residue S2 is modified to N-acetylserine. Residues S2, S6, and S7 each carry the phosphoserine modification. The head stretch occupies residues S2–E107. O-linked (GlcNAc) serine glycosylation occurs at S12. Residues S14–S37 form a disordered region. The residue at position 20 (R20) is a Dimethylated arginine; alternate. R20 bears the Omega-N-methylarginine; alternate mark. Residues R25–S37 are compositionally biased toward low complexity. S63 and S88 each carry phosphoserine. The coil 1A stretch occupies residues E107–L143. The IF rod domain maps to E108–L420. Phosphothreonine is present on T114. The interval Q144–H161 is linker 1. Residue K147 forms a Glycyl lysine isopeptide (Lys-Gly) (interchain with G-Cter in SUMO2) linkage. Residues I162 to L253 form a coil 1B region. Position 196 is an N6-acetyllysine (K196). Positions Q254–I277 are linker 12. A phosphoserine mark is found at S269 and S271. A coil 2 region spans residues I278–E416. Glycyl lysine isopeptide (Lys-Gly) (interchain with G-Cter in SUMO2) cross-links involve residues K282 and K303. Phosphothreonine is present on T306. Residues K313 and K348 each participate in a glycyl lysine isopeptide (Lys-Gly) (interchain with G-Cter in SUMO2) cross-link. A tail region spans residues E417–N483.

This sequence belongs to the intermediate filament family. As to quaternary structure, heterotetramer of two type I and two type II keratins. Interacts with eukaryotic translation initiator factor 3 (eIF3) subunit EIF3S10. Interacts with GPER1. Post-translationally, arg-20 is dimethylated, probably to asymmetric dimethylarginine.

Functionally, blocks interferon-dependent interphase and stimulates DNA synthesis in cells. This is Keratin, type II cytoskeletal 7 from Potorous tridactylus (Potoroo).